We begin with the raw amino-acid sequence, 585 residues long: MYRTRTCGDLRLADEGLVVTLAGWVQKTRKMGGMTFVDIRDRYGITQLVFNQEVDAALCEKANKLGREFVIQVTGTVRERSSKNAHIPTGDIELIVSELNVLNTALTPPFTIEEETDGGDDLRMKYRYLDLRRACVRKNLELRHRMAFEVRRYLDEQGFLEVETPVLVNSTPEGARDFVVPSRMNPGQFYALPQSPQTLKQLLMVSGFDRYFQIVKCFRDEDLRADRQPEFTQIDCEMSFVEQEDVLNMFEGMAKHLFKVIRGVEFKESFMRMTWQDAMKQYGSDKPDLRFGMKFVELMDIMKGHGFSVFDNAAYIGGICAEGAASYTRKQLDALTEFVKRPQVGAKGLVYARVEADGNVKSSVDKFYSQEVLQEMKNAFGAKPGDLILILSGDDAMKTRKQLCELRLEMGNQLGLRDKDKFVCLWVIDFPLFEWNEDDQRFYAMHHPFTSPNPDDIPLLDTDPGAVRANAYDMVINGVEVGGGSIRIHDSQLQDKMFKLLGFTEERAQEQFGFLMNAFKYGAPPHGGLAYGLDRFVSLFAGLDSIRDCIAFPKNNSGRDVMLDAPGVLDPAQLDELNLIVDIKK.

An L-aspartate-binding site is contributed by Glu-173. The interval 197–200 is aspartate; the sequence is QTLK. L-aspartate is bound at residue Arg-219. ATP-binding positions include 219–221 and Gln-228; that span reads RDE. His-446 contacts L-aspartate. Residue Glu-480 participates in ATP binding. Arg-487 provides a ligand contact to L-aspartate. 532 to 535 is a binding site for ATP; the sequence is GLDR.

Belongs to the class-II aminoacyl-tRNA synthetase family. Type 1 subfamily. Homodimer.

Its subcellular location is the cytoplasm. It catalyses the reaction tRNA(Asp) + L-aspartate + ATP = L-aspartyl-tRNA(Asp) + AMP + diphosphate. Functionally, catalyzes the attachment of L-aspartate to tRNA(Asp) in a two-step reaction: L-aspartate is first activated by ATP to form Asp-AMP and then transferred to the acceptor end of tRNA(Asp). In Parabacteroides distasonis (strain ATCC 8503 / DSM 20701 / CIP 104284 / JCM 5825 / NCTC 11152), this protein is Aspartate--tRNA ligase.